Reading from the N-terminus, the 183-residue chain is UPF0397 protein VFMJ11_1662 (183 aa).

5 helical membrane-spanning segments follow: residues 8 to 28 (VVVIAIGAALYGIGGLPMFGI), 41 to 61 (AVLALFSVLYGPIVGFLVGFI), 75 to 95 (WLTWVLGSGIVGMIIGLFPII), 110 to 130 (FLIFVVLAFFGNVFGYGTSAF), and 147 to 167 (LCIIAAGNTFLIAIVGYFILN).

It belongs to the UPF0397 family.

The protein localises to the cell membrane. The polypeptide is UPF0397 protein VFMJ11_1662 (Aliivibrio fischeri (strain MJ11) (Vibrio fischeri)).